The following is a 314-amino-acid chain: Thymidylate synthase (314 aa).

Residues arginine 21 and 176 to 177 (RR) contribute to the dUMP site. Cysteine 196 serves as the catalytic Nucleophile. DUMP contacts are provided by residues 216–219 (RSAD), asparagine 227, and 257–259 (HLY). Aspartate 219 is a (6R)-5,10-methylene-5,6,7,8-tetrahydrofolate binding site. A (6R)-5,10-methylene-5,6,7,8-tetrahydrofolate-binding site is contributed by serine 313.

It belongs to the thymidylate synthase family. Bacterial-type ThyA subfamily. In terms of assembly, homodimer.

The protein resides in the cytoplasm. The enzyme catalyses dUMP + (6R)-5,10-methylene-5,6,7,8-tetrahydrofolate = 7,8-dihydrofolate + dTMP. It participates in pyrimidine metabolism; dTTP biosynthesis. Catalyzes the reductive methylation of 2'-deoxyuridine-5'-monophosphate (dUMP) to 2'-deoxythymidine-5'-monophosphate (dTMP) while utilizing 5,10-methylenetetrahydrofolate (mTHF) as the methyl donor and reductant in the reaction, yielding dihydrofolate (DHF) as a by-product. This enzymatic reaction provides an intracellular de novo source of dTMP, an essential precursor for DNA biosynthesis. In Listeria innocua serovar 6a (strain ATCC BAA-680 / CLIP 11262), this protein is Thymidylate synthase.